Consider the following 305-residue polypeptide: MIKQRTLKRIVQATGVGLHTGKKVTLTMRPAPANTGVIYRRTDLNPPVDFPADAKSVRDTMLCTCLVNEHDVRISTVEHLNAALAGLGIDNIVIDVDAPEIPIMDGSASPFVYLLLDAGIEELNCAKKFVRIKQSVRVEDGDKWAEMKPFNGFSLDFTIDFNHPAIDAGNQRYRLDFSADAFVRQISRARTFGFMRDIEYLQSRGLCLGGSMDCAIVVDDYRVLNEDGLRFEDEFVRHKMLDAIGDLFMCGHNIIGAFSAFKSGHALNNKLLQAVLANQEAWEYVTFEDEAEMPLAFKAPSIVLA.

Residues histidine 79, histidine 238, and aspartate 242 each coordinate Zn(2+). Residue histidine 265 is the Proton donor of the active site.

Belongs to the LpxC family. Zn(2+) serves as cofactor.

It catalyses the reaction a UDP-3-O-[(3R)-3-hydroxyacyl]-N-acetyl-alpha-D-glucosamine + H2O = a UDP-3-O-[(3R)-3-hydroxyacyl]-alpha-D-glucosamine + acetate. Its pathway is glycolipid biosynthesis; lipid IV(A) biosynthesis; lipid IV(A) from (3R)-3-hydroxytetradecanoyl-[acyl-carrier-protein] and UDP-N-acetyl-alpha-D-glucosamine: step 2/6. In terms of biological role, catalyzes the hydrolysis of UDP-3-O-myristoyl-N-acetylglucosamine to form UDP-3-O-myristoylglucosamine and acetate, the committed step in lipid A biosynthesis. This chain is UDP-3-O-acyl-N-acetylglucosamine deacetylase, found in Pectobacterium atrosepticum (strain SCRI 1043 / ATCC BAA-672) (Erwinia carotovora subsp. atroseptica).